We begin with the raw amino-acid sequence, 38 residues long: Photosystem II reaction center protein L (38 aa).

Residues 17–37 (SLYWGLLLIFVLAVLFSSYIF) traverse the membrane as a helical segment.

It belongs to the PsbL family. In terms of assembly, PSII is composed of 1 copy each of membrane proteins PsbA, PsbB, PsbC, PsbD, PsbE, PsbF, PsbH, PsbI, PsbJ, PsbK, PsbL, PsbM, PsbT, PsbY, PsbZ, Psb30/Ycf12, at least 3 peripheral proteins of the oxygen-evolving complex and a large number of cofactors. It forms dimeric complexes.

Its subcellular location is the plastid. It is found in the chloroplast thylakoid membrane. One of the components of the core complex of photosystem II (PSII). PSII is a light-driven water:plastoquinone oxidoreductase that uses light energy to abstract electrons from H(2)O, generating O(2) and a proton gradient subsequently used for ATP formation. It consists of a core antenna complex that captures photons, and an electron transfer chain that converts photonic excitation into a charge separation. This subunit is found at the monomer-monomer interface and is required for correct PSII assembly and/or dimerization. This Bigelowiella natans (Pedinomonas minutissima) protein is Photosystem II reaction center protein L.